The sequence spans 199 residues: Recombination protein RecR (199 aa).

The C4-type zinc-finger motif lies at 56 to 71 (CQQCNNYTEQTLCALC). A Toprim domain is found at 79–174 (TLLCVVESPA…NISQLAHGIP (96 aa)).

The protein belongs to the RecR family.

Functionally, may play a role in DNA repair. It seems to be involved in an RecBC-independent recombinational process of DNA repair. It may act with RecF and RecO. The polypeptide is Recombination protein RecR (Legionella pneumophila subsp. pneumophila (strain Philadelphia 1 / ATCC 33152 / DSM 7513)).